The sequence spans 649 residues: Alpha-amylase (649 aa).

The active-site Nucleophile is E124. Catalysis depends on D215, which acts as the Proton donor.

Belongs to the glycosyl hydrolase 57 family. As to quaternary structure, homodimer.

The enzyme catalyses Endohydrolysis of (1-&gt;4)-alpha-D-glucosidic linkages in polysaccharides containing three or more (1-&gt;4)-alpha-linked D-glucose units.. Functionally, displays a broad range of substrate specificity, with the capacity to hydrolyze carbohydrates as simple as maltotriose. The protein is Alpha-amylase (amyA) of Pyrococcus furiosus (strain ATCC 43587 / DSM 3638 / JCM 8422 / Vc1).